Reading from the N-terminus, the 928-residue chain is Protein Niban 1 (928 aa).

The N-myristoyl glycine moiety is linked to residue G2. S579, S582, S596, S602, and S646 each carry phosphoserine. Over residues 580–596 (VSSLTDLKPPTGSNQAS) the composition is skewed to polar residues. A disordered region spans residues 580–600 (VSSLTDLKPPTGSNQASPARR). Disordered regions lie at residues 618-654 (VFQE…GTEQ) and 669-707 (ATED…TASG). Over residues 690–701 (LEDEEPAQEEPE) the composition is skewed to acidic residues. S708 is subject to Phosphoserine. Disordered regions lie at residues 723-877 (PVDS…ATAS) and 899-928 (PNPD…PSEE). Over residues 801–818 (GGLTEEPLGPMEGELPGE) the composition is skewed to low complexity. Positions 825 to 834 (HEGRGGKCTE) are enriched in basic and acidic residues. A compositionally biased stretch (low complexity) spans 865–877 (MGGQSSAAQATAS). A compositionally biased stretch (basic and acidic residues) spans 905–915 (LSHKDDVKEGE). At S926 the chain carries Phosphoserine.

The protein belongs to the Niban family. In terms of tissue distribution, expressed in various types of thyroid tumor such as papillary thyroid carcinomas and oxyphilic thyroid tumors but not in normal thyroid tissue (at protein level). Strongly expressed in heart, skeletal muscle, pancreas, white blood cells and prostate with moderate expression in colon and spleen. Expressed in renal carcinoma cells but not in normal kidney.

The protein localises to the cytoplasm. It localises to the membrane. Its function is as follows. Regulates phosphorylation of a number of proteins involved in translation regulation including EIF2A, EIF4EBP1 and RPS6KB1. May be involved in the endoplasmic reticulum stress response. This chain is Protein Niban 1, found in Homo sapiens (Human).